The following is a 132-amino-acid chain: Ribosome-binding factor A (132 aa).

It belongs to the RbfA family. In terms of assembly, monomer. Binds 30S ribosomal subunits, but not 50S ribosomal subunits or 70S ribosomes.

The protein localises to the cytoplasm. Functionally, one of several proteins that assist in the late maturation steps of the functional core of the 30S ribosomal subunit. Associates with free 30S ribosomal subunits (but not with 30S subunits that are part of 70S ribosomes or polysomes). Required for efficient processing of 16S rRNA. May interact with the 5'-terminal helix region of 16S rRNA. The protein is Ribosome-binding factor A of Treponema denticola (strain ATCC 35405 / DSM 14222 / CIP 103919 / JCM 8153 / KCTC 15104).